Consider the following 310-residue polypeptide: Malate dehydrogenase (310 aa).

NAD(+) contacts are provided by residues 7–12 (GAGNVG) and D32. Positions 81 and 87 each coordinate substrate. NAD(+) contacts are provided by residues N94 and 117 to 119 (VSN). Substrate-binding residues include N119 and R150. H174 acts as the Proton acceptor in catalysis.

This sequence belongs to the LDH/MDH superfamily. MDH type 3 family.

The enzyme catalyses (S)-malate + NAD(+) = oxaloacetate + NADH + H(+). Catalyzes the reversible oxidation of malate to oxaloacetate. The chain is Malate dehydrogenase from Chlorobium limicola (strain DSM 245 / NBRC 103803 / 6330).